We begin with the raw amino-acid sequence, 368 residues long: N-acetylneuraminate epimerase 2 (368 aa).

A signal peptide spans 1 to 19 (MNKTITALAILMASFAANA). Kelch repeat units follow at residues 40-84 (TVYI…AFID), 86-137 (NLYV…FVHN), 139-173 (KAYVTGGVNQNIFNGYFEDLNEAGKDSTAIDKINA), 174-219 (YYFD…VNKG), 222-265 (TWLI…VAGG), 287-336 (ENYQ…LWNN), and 338-367 (LLIIGGEAAGGKAVTDSVLISVKDNKVTVQ). Residue E228 is the Proton acceptor of the active site.

This sequence belongs to the NanM family. In terms of assembly, homodimer.

It localises to the periplasm. The catalysed reaction is N-acetyl-alpha-neuraminate = N-acetyl-beta-neuraminate. In terms of biological role, converts alpha-N-acetylneuranimic acid (Neu5Ac) to the beta-anomer, accelerating the equilibrium between the alpha- and beta-anomers. Probably facilitates sialidase-negative bacteria to compete successfully for limited amounts of extracellular Neu5Ac, which is likely taken up in the beta-anomer. In addition, the rapid removal of sialic acid from solution might be advantageous to the bacterium to damp down host responses. The sequence is that of N-acetylneuraminate epimerase 2 from Escherichia coli O6:H1 (strain CFT073 / ATCC 700928 / UPEC).